Consider the following 239-residue polypeptide: Fatty acid metabolism regulator protein (239 aa).

One can recognise an HTH gntR-type domain in the interval 6–74; that stretch reads QSPAGFAEEY…HGKPTKVNNF (69 aa). Residues 34-53 constitute a DNA-binding region (H-T-H motif); it reads ERELSELIGVTRTTLREVLQ.

As to quaternary structure, homodimer.

The protein localises to the cytoplasm. Multifunctional regulator of fatty acid metabolism. This Proteus mirabilis (strain HI4320) protein is Fatty acid metabolism regulator protein.